The chain runs to 618 residues: MSVEQEVINLGKNIFFNAHHSPMGCSPVFTLGYPGQSGGFDLELGSPPNQNIYIGLQDDGQERYRAFPFFGEGLDERDRYTTDESDSGSSERHSVQQEESGLIIPYNRDEIVRRFGAAIDEWQAGDLTFRLISPFEGVPDPETATEEQLRFALMPAVLAEITVDNTRGTSTRKAFFGLQNNDPVSAIRRLEDVTGGRICGIGQGRHTAIARAIRDYQRRIFYDGIDSQAKGSGKPPVWPWSGRAVLMDTPAGEKATYRFGLCFYRPVRHNRNRCSYYYSRYFANIEEVAEYALAQFNRKLEVARQADALVNDAKLSEDQKFIVAHAIRSYYGSTELLEHDGKPLWIVNEGEYRMMNTFDLLVDQLFYELKMNPWTVKNELDLYTSRYSYRDTVDFPGDATEYPGGISFTHDMGVANSFSLPGYSSYELHAIDDCFSHMTHEQLVNWVLSATVYVHQTNDREWLEPQPADSGASLDSMVNRDHPDPSQRTGMMGLDSSRTMGGRKSPPIQPGRLVGASAEQHLFAGKSWAAYVAMEKLFRDNGRKSAAALAGRQPELGAGTITSHLLPGGIFQPSFRRTMTPRSSLRSRVLSSRYTPDAKKRWIQTADSVHILRRCPRI.

Disordered stretches follow at residues 76 to 100 and 463 to 509; these read ERDR…QEES and LEPQ…PPIQ.

The protein belongs to the glycosyl hydrolase 52 family.

It localises to the secreted. It carries out the reaction Hydrolysis of (1-&gt;4)-beta-D-xylans, to remove successive D-xylose residues from the non-reducing termini.. The protein operates within glycan degradation; xylan degradation. This Geobacillus stearothermophilus (Bacillus stearothermophilus) protein is Beta-xylosidase (xylA).